The chain runs to 425 residues: MAMMHPPQPPQGSYHHPQTLEEVRTLWIGDLQYWVDENYLTSCFSQTGELVSVKVIRNKITGQPEGYGFIEFISHAAAERTLQTYNGTQMPGTELTFRLNWASFGSGQKVDAGPDHSIFVGDLAPDVTDYLLQETFRVHYSSVRGAKVVTDPSTGRSKGYGFVKFAEESERNRAMAEMNGLYCSTRPMRISAATPKKNVGVQQQYVTKAVYPVTVPSAVAAPVQAYVAPPESDVTCTTISVANLDQNVTEEELKKAFSQLGEVIYVKIPATKGYGYVQFKTRPSAEEAVQRMQGQVIGQQAVRISWSKNPGQDGWVTQADPNQWNGYYGYGQGYDAYAYGATQDPSVYAYGGYGYPQYPQQGEGTQDISNSAAGGVAGAEQELYDPLATPDVDKLNAAYLSVHASAILGRPMWQRTSSLTSQLGK.

3 RRM domains span residues 24–102 (RTLW…LNWA), 116–195 (HSIF…AATP), and 237–309 (TTIS…WSKN).

Belongs to the polyadenylate-binding RBP47 family. Interacts with the poly(A) tail of mRNA in nucleus.

It is found in the nucleus. It localises to the cytoplasmic granule. In terms of biological role, heterogeneous nuclear ribonucleoprotein (hnRNP)-protein binding the poly(A) tail of mRNA and probably involved in some steps of pre-mRNA maturation. This is Polyadenylate-binding protein RBP47B' (RBP47B') from Arabidopsis thaliana (Mouse-ear cress).